We begin with the raw amino-acid sequence, 136 residues long: ATP synthase epsilon chain (136 aa).

The segment at 95–115 is disordered; sequence DFSEAQSRLEEANKGSDRREQ. Positions 101-115 are enriched in basic and acidic residues; that stretch reads SRLEEANKGSDRREQ.

It belongs to the ATPase epsilon chain family. F-type ATPases have 2 components, CF(1) - the catalytic core - and CF(0) - the membrane proton channel. CF(1) has five subunits: alpha(3), beta(3), gamma(1), delta(1), epsilon(1). CF(0) has three main subunits: a, b and c.

It is found in the cellular thylakoid membrane. In terms of biological role, produces ATP from ADP in the presence of a proton gradient across the membrane. The polypeptide is ATP synthase epsilon chain (Rippkaea orientalis (strain PCC 8801 / RF-1) (Cyanothece sp. (strain PCC 8801))).